A 247-amino-acid polypeptide reads, in one-letter code: uncharacterized protein (247 aa).

This is an uncharacterized protein from Schizosaccharomyces pombe (strain 972 / ATCC 24843) (Fission yeast).